A 1960-amino-acid chain; its full sequence is [F-actin]-monooxygenase MICAL3 (1960 aa).

Positions 2–494 are monooxygenase domain; the sequence is EESKNEATNR…RHLYDTGDTK (493 aa). FAD contacts are provided by residues C97, 116-118, 123-125, F183, Y298, and D398; these read EKR and RNN. The region spanning 518–624 is the Calponin-homology (CH) domain; the sequence is VARSSKLLGW…YLTQFYEMFK (107 aa). Phosphoserine is present on S649. The disordered stretch occupies residues 658–704; it reads GQTISRKRSPKDKKEKDLDGAGKRRKTSQSEEEDTPRGHRGARPTLV. The segment covering 669–679 has biased composition (basic and acidic residues); that stretch reads DKKEKDLDGAG. Phosphoserine is present on residues S685 and S687. The 63-residue stretch at 762-824 folds into the LIM zinc-binding domain; that stretch reads DTCYFCQKRV…KPHYCYRLSG (63 aa). Residues C764, C767, H785, C788, C791, C794, C814, and H817 each contribute to the Zn(2+) site. 2 disordered regions span residues 826–887 and 906–1295; these read AQRK…LRGT and LEEV…EALK. A Phosphothreonine modification is found at T887. At S971 the chain carries Phosphoserine. Residues 984–1014 are compositionally biased toward acidic residues; the sequence is GEEEEEDEEDEEEEEEEEDEEDEEEDEDESS. Basic and acidic residues-rich tracts occupy residues 1039–1051 and 1072–1084; these read HWTH…EERA and DVDS…KGEA. Phosphoserine is present on residues S1129, S1139, S1156, and S1188. 2 stretches are compositionally biased toward pro residues: residues 1192-1203 and 1217-1233; these read SPLPEPSTPPAE and RTPP…PPTQ. S1250 carries the phosphoserine modification. Position 1252 is a phosphothreonine (T1252). 3 positions are modified to phosphoserine: S1254, S1286, and S1313. Residues 1277 to 1286 show a composition bias toward polar residues; sequence QGVTKDTLGS. Disordered stretches follow at residues 1316–1550 and 1564–1782; these read LTPV…KRGL and RMRA…EEEL. T1317 carries the phosphothreonine modification. Residues 1379 to 1393 are compositionally biased toward basic and acidic residues; the sequence is PDREPKGPREEHRDL. Over residues 1394–1406 the composition is skewed to low complexity; the sequence is SSSSGLGLQGSSS. Residue S1404 is modified to Phosphoserine. Over residues 1407–1425 the composition is skewed to polar residues; the sequence is RTRTPGSQSFNTSDSTMLT. T1425 is subject to Phosphothreonine. The segment covering 1485-1503 has biased composition (acidic residues); that stretch reads SVDEIPFADDVEDTYDDNT. Over residues 1594-1611 the composition is skewed to low complexity; it reads AAAAPRTPRTPAPRRATA. Residues 1616–1627 show a composition bias toward basic and acidic residues; sequence GPEEPAPRHEAT. Residues 1633–1653 show a composition bias toward low complexity; sequence SPPSDSGGPDGSVTSSEGSSG. Over residues 1654–1672 the composition is skewed to basic residues; sequence KSKKRSSLFSPRRSKKEKK. S1660 and S1663 each carry phosphoserine. The span at 1718-1727 shows a compositional bias: polar residues; it reads CPSTPSSGTT. The segment covering 1762 to 1778 has biased composition (basic and acidic residues); it reads VLERTSQKSRKEPRTYT. Residues 1779–1952 adopt a coiled-coil conformation; the sequence is EEELNAKLTR…DKDLEAAMLS (174 aa). One can recognise a bMERB domain in the interval 1799–1948; that stretch reads KQEELKRLHR…EKEEDKDLEA (150 aa). At S1870 the chain carries Phosphoserine.

This sequence belongs to the Mical family. In terms of assembly, interacts with RAB1B, RAB8A, RAB10, RAB13 and RAB15 (in their GTP-bound forms); binding to RAB1B is of low affinity compared to other Rab proteins; at least in case of RAB8A can bind 2 molecules of RAB8A simultaneously through a high and a low affinity binding site, respectively. Interacts with ERC1 and RAB8A; may bridge ERC1 with RAB8A. Interacts with KIF23 and ERC1; enhances the interaction between KIF23 and ERC1. Interacts with NINL. FAD serves as cofactor.

The protein localises to the cytoplasm. The protein resides in the cell cortex. Its subcellular location is the cytoskeleton. It is found in the nucleus. It localises to the midbody. The protein localises to the spindle. The protein resides in the cilium basal body. It catalyses the reaction L-methionyl-[F-actin] + NADPH + O2 + H(+) = L-methionyl-(R)-S-oxide-[F-actin] + NADP(+) + H2O. Its function is as follows. Monooxygenase that promotes depolymerization of F-actin by mediating oxidation of specific methionine residues on actin to form methionine-sulfoxide, resulting in actin filament disassembly and preventing repolymerization. In the absence of actin, it also functions as a NADPH oxidase producing H(2)O(2). Seems to act as Rab effector protein and play a role in vesicle trafficking. Involved in exocytic vesicles tethering and fusion: the monooxygenase activity is required for this process and implicates RAB8A associated with exocytotic vesicles. Required for cytokinesis. Contributes to stabilization and/or maturation of the intercellular bridge independently of its monooxygenase activity. Promotes recruitment of Rab8 and ERC1 to the intercellular bridge, and together these proteins are proposed to function in timely abscission. The sequence is that of [F-actin]-monooxygenase MICAL3 (MICAL3) from Bos taurus (Bovine).